A 235-amino-acid polypeptide reads, in one-letter code: Zein-alpha PMS1 (235 aa).

Residues Met1–Ala21 form the signal peptide.

The protein belongs to the zein family.

Its function is as follows. Zeins are major seed storage proteins. The protein is Zein-alpha PMS1 (ZMPMS1) of Zea mays (Maize).